A 153-amino-acid polypeptide reads, in one-letter code: uncharacterized protein (153 aa).

The next 2 membrane-spanning stretches (helical) occupy residues 1–21 and 106–126; these read MAATPAAIEVSLTIVFVLFFS and IVPIPFYCISKAQECFLTVYI.

The protein localises to the membrane. This is an uncharacterized protein from Saccharomyces cerevisiae (strain ATCC 204508 / S288c) (Baker's yeast).